The primary structure comprises 270 residues: Gene 1 protein (270 aa).

Positions 225–249 (WAEEDPPVAAVPLEPEDATAPGKEP) are disordered.

The chain is Gene 1 protein (1) from Mycobacterium (Mycobacteriophage D29).